The sequence spans 163 residues: Antimicrobial peptide 2 (163 aa).

The signal sequence occupies residues 1–22 (MLNMKSFALLMLFATLVGVTIA). 2 consecutive Chitin-binding type-1 domains span residues 26–66 (NGKC…EIEP) and 69–107 (AGQC…SCLP). Cystine bridges form between Cys-29/Cys-42, Cys-36/Cys-48, and Cys-41/Cys-55. Residues 58–67 (NTPLSEIEPT) constitute a propeptide that is removed on maturation. Cystine bridges form between Cys-72–Cys-83, Cys-77–Cys-89, Cys-82–Cys-96, and Cys-101–Cys-105. A propeptide spanning residues 100–163 (MCQGSCLPDM…QVEPAVTKAP (64 aa)) is cleaved from the precursor.

As to expression, expressed in roots, flowers, stem and leaves.

Antimicrobial peptide. In Stellaria media (Common chickweed), this protein is Antimicrobial peptide 2.